Here is a 95-residue protein sequence, read N- to C-terminus: Glutaredoxin 1 (95 aa).

The region spanning 1–95 (MNKSILHTII…DKLLEHQPKN (95 aa)) is the Glutaredoxin domain. Residues Cys-17 and Cys-20 are joined by a disulfide bond.

This sequence belongs to the glutaredoxin family. As to quaternary structure, monomer.

The protein resides in the cytoplasm. Has a glutathione-disulfide oxidoreductase activity in the presence of NADPH and glutathione reductase. Reduces low molecular weight disulfides and proteins. This Rickettsia prowazekii (strain Madrid E) protein is Glutaredoxin 1 (grxC1).